The sequence spans 302 residues: Nucleotide-binding protein Bmul_0520/BMULJ_02739 (302 aa).

Residue G8–S15 coordinates ATP. A GTP-binding site is contributed by D57 to S60.

Belongs to the RapZ-like family.

Its function is as follows. Displays ATPase and GTPase activities. The polypeptide is Nucleotide-binding protein Bmul_0520/BMULJ_02739 (Burkholderia multivorans (strain ATCC 17616 / 249)).